The sequence spans 258 residues: 4-hydroxy-tetrahydrodipicolinate reductase (258 aa).

Residues 8–13, 86–88, and 110–113 each bind NAD(+); these read GGSGKM, GTT, and ATNM. Catalysis depends on H142, which acts as the Proton donor/acceptor. H143 is a (S)-2,3,4,5-tetrahydrodipicolinate binding site. K146 functions as the Proton donor in the catalytic mechanism. 152–153 serves as a coordination point for (S)-2,3,4,5-tetrahydrodipicolinate; that stretch reads GT.

Belongs to the DapB family.

It is found in the cytoplasm. The catalysed reaction is (S)-2,3,4,5-tetrahydrodipicolinate + NAD(+) + H2O = (2S,4S)-4-hydroxy-2,3,4,5-tetrahydrodipicolinate + NADH + H(+). It carries out the reaction (S)-2,3,4,5-tetrahydrodipicolinate + NADP(+) + H2O = (2S,4S)-4-hydroxy-2,3,4,5-tetrahydrodipicolinate + NADPH + H(+). It participates in amino-acid biosynthesis; L-lysine biosynthesis via DAP pathway; (S)-tetrahydrodipicolinate from L-aspartate: step 4/4. Its function is as follows. Catalyzes the conversion of 4-hydroxy-tetrahydrodipicolinate (HTPA) to tetrahydrodipicolinate. The sequence is that of 4-hydroxy-tetrahydrodipicolinate reductase from Campylobacter hominis (strain ATCC BAA-381 / DSM 21671 / CCUG 45161 / LMG 19568 / NCTC 13146 / CH001A).